The following is a 419-amino-acid chain: eIF5-mimic protein 1 (419 aa).

The interval 1 to 22 (MNKHQKPVLTGQRFKTRKRDEK) is disordered. At Lys-117 the chain carries N6-acetyllysine. A W2 domain is found at 248 to 415 (VQQSLGTRKE…QNAEEESESE (168 aa)). Ser-412, Ser-414, and Ser-419 each carry phosphoserine.

It belongs to the BZW family. Interacts with EIF3E, EIF2S2 and EIF3C.

Its subcellular location is the cytoplasm. Its function is as follows. Translation initiation regulator which represses non-AUG initiated translation and repeat-associated non-AUG (RAN) initiated translation by acting as a competitive inhibitor of eukaryotic translation initiation factor 5 (EIF5) function. Increases the accuracy of translation initiation by impeding EIF5-dependent translation from non-AUG codons by competing with it for interaction with EIF2S2 within the 43S pre-initiation complex (PIC) in an EIF3C-binding dependent manner. The polypeptide is eIF5-mimic protein 1 (Bzw2) (Mus musculus (Mouse)).